The primary structure comprises 515 residues: 2,3-bisphosphoglycerate-independent phosphoglycerate mutase 1 (515 aa).

The Mn(2+) site is built by D14 and S64. S64 serves as the catalytic Phosphoserine intermediate. Substrate-binding positions include H125, 155–156, R187, R193, 264–267, and K337; these read RD and RADR. Positions 404, 408, 445, 446, and 464 each coordinate Mn(2+).

Belongs to the BPG-independent phosphoglycerate mutase family. The cofactor is Mn(2+).

The enzyme catalyses (2R)-2-phosphoglycerate = (2R)-3-phosphoglycerate. Its pathway is carbohydrate degradation; glycolysis; pyruvate from D-glyceraldehyde 3-phosphate: step 3/5. In terms of biological role, catalyzes the interconversion of 2-phosphoglycerate and 3-phosphoglycerate. The chain is 2,3-bisphosphoglycerate-independent phosphoglycerate mutase 1 from Methanosarcina acetivorans (strain ATCC 35395 / DSM 2834 / JCM 12185 / C2A).